The primary structure comprises 541 residues: FAD-linked oxidoreductase pynB (541 aa).

The first 20 residues, 1–20, serve as a signal peptide directing secretion; the sequence is MRLSARGFVWSALLACTASA. Residues Asn30, Asn57, Asn117, Asn131, Asn158, Asn253, Asn306, Asn343, Asn430, and Asn461 are each glycosylated (N-linked (GlcNAc...) asparagine). The FAD-binding PCMH-type domain occupies 71-242; the sequence is FNEFPALIAY…VDFDLQLMQF (172 aa).

Belongs to the oxygen-dependent FAD-linked oxidoreductase family. FAD is required as a cofactor.

The protein operates within secondary metabolite biosynthesis. Its function is as follows. FAD-linked oxidoreductase; part of the gene cluster that mediates the biosynthesis of pyranonigrins, a family of antioxidative compounds. The first step of pyranonigrins biosynthesis is performed by the hybrid PKS-NRPS synthetase that condenses 6 malonyl-CoA units to an acetyl starter unit, to form a 1,3,5-trioxotetradecane-6,8-dienyl-ACP. The enoyl reductase (ER) domain of pynA is likely to be functional during the first two rounds of polyketide chain extension, to generate the saturated C-C bonds of the alkyl side chain. PynA subsequently forms the amide bond between the acyl chain and L-serine. Although pynA has a terminal reductase domain, it appears to require the thioesterase pynI for the release of the straight-chain intermediate from pynA via the formation of a tetramic acid pyranonigrin J. The methyltransferase pynC then coverts pyranonigrin J to pyranonigrin I via N-methylation. The FAD-dependent monooxygenase pynG catalyzes an epoxidation-mediated cyclization to form the dihydro-gamma-pyrone moiety, followed by pynD-catalyzed oxidation of the alcohol to the ketone and enolization to yield the characteristic tetramic acid-fused gamma-pyrone core of pyranonigrin H. Pyranonigrin H is substrate of pynH for dehydration-mediated exo-methylene formation from the serine side chain to produce pyranonigrin E, before the oxidase pynE reduces the exo-methylene of pyranonigrin E into a pendant methyl to form pyranonigrin G. The FAD-linked oxidoreductase pynB performs the reverse reaction and converts pyranonigrin G back to pyranonigrin E. This Aspergillus niger (strain ATCC MYA-4892 / CBS 513.88 / FGSC A1513) protein is FAD-linked oxidoreductase pynB.